The primary structure comprises 216 residues: Probable nicotinate-nucleotide adenylyltransferase (216 aa).

This sequence belongs to the NadD family.

It catalyses the reaction nicotinate beta-D-ribonucleotide + ATP + H(+) = deamido-NAD(+) + diphosphate. It participates in cofactor biosynthesis; NAD(+) biosynthesis; deamido-NAD(+) from nicotinate D-ribonucleotide: step 1/1. Its function is as follows. Catalyzes the reversible adenylation of nicotinate mononucleotide (NaMN) to nicotinic acid adenine dinucleotide (NaAD). The polypeptide is Probable nicotinate-nucleotide adenylyltransferase (Shewanella pealeana (strain ATCC 700345 / ANG-SQ1)).